We begin with the raw amino-acid sequence, 400 residues long: Pectinesterase B (400 aa).

2 residues coordinate substrate: T171 and Q205. D228 (proton donor) is an active-site residue. D261 (nucleophile) is an active-site residue. Substrate contacts are provided by R325 and W327.

The protein belongs to the pectinesterase family.

It catalyses the reaction [(1-&gt;4)-alpha-D-galacturonosyl methyl ester](n) + n H2O = [(1-&gt;4)-alpha-D-galacturonosyl](n) + n methanol + n H(+). It functions in the pathway glycan metabolism; pectin degradation; 2-dehydro-3-deoxy-D-gluconate from pectin: step 1/5. The sequence is that of Pectinesterase B (pemB) from Pectobacterium parmentieri.